The following is a 261-amino-acid chain: MASTSVSQGRVALVTGAGQGIGRAIALRLASDGFDVALNDLQANEANLVSALAAIEAVGRKGCYIFADVSQETEVEQMISKVVEELGGLDVMVCNAGISLMKSFFDTTAEDFDRITSVNLRGTFLCYKHAGKQMVTQGKGGRIIGACSGTGKKGQPLFSAYAASKFGIRGLTQVAALEFGPHGISVNAFAPGPVKTPMYDHFETIIGTPKGVLEQELNKTAALGRIALPEDVAVVVSFLASKEASLITGQTINVDGGIVFD.

The NADP(+) site is built by Ile21, Asp68, Asn95, Lys128, Tyr161, Lys165, Val194, and Thr196. Tyr161 functions as the Proton acceptor in the catalytic mechanism. Lys165 acts as the Lowers pKa of active site Tyr in catalysis.

It belongs to the short-chain dehydrogenases/reductases (SDR) family.

The protein operates within secondary metabolite biosynthesis. Short-chain dehydrogenase/reductase, part of the gene cluster that mediates the biosynthesis of melleolides, a range of antifungal and phytotoxic polyketide derivatives composed of an orsellinic acid (OA) moiety esterified to various sesquiterpene alcohols. The first step in melleolides biosynthesis is performed by the delta(6)-protoilludene synthase PRO1 which catalyzes the cyclization of farnesyl diphosphate to protoilludene. The orsellinic acid synthase armB produces OA by condensing acetyl-CoA with 3 malonyl-CoA units in a three-round chain elongation reaction folowed by a C2-C7 ring closure. ArmB further catalyzes the trans-esterification of OA to the various sesquiterpene alcohols resulting from the hydroxylation of protoilludene. The melleolides cluster also includes 5 cytochrome P450 monooxygenases, 4 NAD(+)-dependent oxidoreductases, one flavin-dependent oxidoreductase, and one O-methyltransferase. The cytochrome P450 monooxygenases may be involved in protoilludene hydroxylation to elaborate melleolides with multiple alcohol groups, such as melleolide D, which carries alcohol functionalities at C-4, C-5, C-10, and C-13. The role of the NAD(+)-dependent enzymes remains unknown. Numerous melleolides, including arnamial, show 5'-O-methylation of the aromatic moiety which may be catalyzed by the methyltransferase encoded in the cluster. The flavin-dependent oxidoreductase might represent the dehydrogenase yielding the aldehyde in position 1 of arnamial and other melleolides. Finally, several halogenase localized outside of the cluster, are able to catalyze the transfer of a single chlorine atom to the melleolide backbone, resulting in a 6'-chloromelleolide product. This chain is Short-chain dehydrogenase/reductase ARMGADRAFT_1018421, found in Armillaria gallica (Bulbous honey fungus).